A 181-amino-acid chain; its full sequence is Malignant T-cell-amplified sequence 2 (181 aa).

Residues 92 to 171 enclose the PUA domain; it reads LPHQQVDKGA…IGIENIHYLN (80 aa).

It belongs to the MCTS1 family.

The protein resides in the cytoplasm. In Mus musculus (Mouse), this protein is Malignant T-cell-amplified sequence 2.